The following is a 593-amino-acid chain: UvrABC system protein C (593 aa).

In terms of domain architecture, GIY-YIG spans 17–94; that stretch reads MEPGCYLMKD…IKQYQPRYNI (78 aa). In terms of domain architecture, UVR spans 199–234; sequence KTILKSLEERMLTASESLDFERAKEYRDLIQHIQNL.

It belongs to the UvrC family. Interacts with UvrB in an incision complex.

Its subcellular location is the cytoplasm. The UvrABC repair system catalyzes the recognition and processing of DNA lesions. UvrC both incises the 5' and 3' sides of the lesion. The N-terminal half is responsible for the 3' incision and the C-terminal half is responsible for the 5' incision. The polypeptide is UvrABC system protein C (Staphylococcus aureus (strain MSSA476)).